A 784-amino-acid polypeptide reads, in one-letter code: uncharacterized protein (784 aa).

The 198-residue stretch at 422–619 folds into the 3'-5' exonuclease domain; sequence IRIVQNEQDL…EVFQKIVEVV (198 aa).

This is an uncharacterized protein from Caenorhabditis elegans.